Reading from the N-terminus, the 273-residue chain is Nitrogenase iron protein (273 aa).

8 to 15 serves as a coordination point for ATP; it reads GKGGIGKS. C95 contacts [4Fe-4S] cluster. R98 is subject to ADP-ribosylarginine; by dinitrogenase reductase ADP-ribosyltransferase. Position 130 (C130) interacts with [4Fe-4S] cluster.

It belongs to the NifH/BchL/ChlL family. Homodimer. The cofactor is [4Fe-4S] cluster. The reversible ADP-ribosylation of Arg-98 inactivates the nitrogenase reductase and regulates nitrogenase activity.

The enzyme catalyses N2 + 8 reduced [2Fe-2S]-[ferredoxin] + 16 ATP + 16 H2O = H2 + 8 oxidized [2Fe-2S]-[ferredoxin] + 2 NH4(+) + 16 ADP + 16 phosphate + 6 H(+). In terms of biological role, the key enzymatic reactions in nitrogen fixation are catalyzed by the nitrogenase complex, which has 2 components: the iron protein and the molybdenum-iron protein. The sequence is that of Nitrogenase iron protein from Roseiflexus sp. (strain RS-1).